The primary structure comprises 109 residues: uncharacterized protein (109 aa).

The next 2 membrane-spanning stretches (helical) occupy residues 18–38 (TTLA…LLTL) and 48–68 (AGLI…VIAL).

Its subcellular location is the cell membrane. This is an uncharacterized protein from Mycobacterium tuberculosis (strain CDC 1551 / Oshkosh).